The following is a 153-amino-acid chain: ORM1-like protein 3 (153 aa).

Residues Met1–Gly21 are Cytoplasmic-facing. Helical transmembrane passes span Ile22–Phe42 and Val43–Phe63. Residues Leu64–Gln94 are Cytoplasmic-facing. A helical transmembrane segment spans residues Phe95–Thr117. At Lys118–Arg121 the chain is on the extracellular side. A helical transmembrane segment spans residues Val122 to Phe142. At Pro137 the chain carries Hydroxyproline. Over His143–Tyr153 the chain is Cytoplasmic.

It belongs to the ORM family. As to quaternary structure, ceramide-sensitive subunit of the serine palmitoyltransferase (SPT) complex, which is also composed of SPTLC1, SPTLC2/3 and SPTSSA/B. In terms of processing, when hydroxylated at Pro-137, ubiquitinated via 'Lys-48'-linkage, leading to proteasomal degradation. In endothelial cells, ORMDL3 proteasomal degradation is controlled by the sphingosine 1-phosphate receptor signaling pathway.

The protein resides in the endoplasmic reticulum membrane. Its function is as follows. Plays an essential role in the homeostatic regulation of sphingolipid de novo biosynthesis by modulating the activity of the serine palmitoyltransferase (SPT) in response to ceramide levels. When complexed to SPT, the binding of ceramides to its N-terminus stabilizes a conformation that block SPT substrate entry, hence preventing SPT catalytic activity. Through this mechanism, maintains ceramide levels at sufficient concentrations for the production of complex sphingolipids, but which prevents the accumulation of ceramides to levels that trigger apoptosis. This Danio rerio (Zebrafish) protein is ORM1-like protein 3 (ormdl3).